Consider the following 169-residue polypeptide: Large ribosomal subunit protein uL10 (169 aa).

It belongs to the universal ribosomal protein uL10 family. In terms of assembly, part of the 50S ribosomal subunit.

This chain is Large ribosomal subunit protein uL10 (rplJ), found in Deinococcus radiodurans (strain ATCC 13939 / DSM 20539 / JCM 16871 / CCUG 27074 / LMG 4051 / NBRC 15346 / NCIMB 9279 / VKM B-1422 / R1).